Consider the following 481-residue polypeptide: Bifunctional protein HldE (481 aa).

A ribokinase region spans residues 1–318; it reads MKVTLPDFRR…ENAIRGRAET (318 aa). 195–198 provides a ligand contact to ATP; sequence NLSE. Residue aspartate 264 is part of the active site. The segment at 344–481 is cytidylyltransferase; that stretch reads MTNGIFDILH…KRRAGQRTVV (138 aa).

It in the N-terminal section; belongs to the carbohydrate kinase PfkB family. In the C-terminal section; belongs to the cytidylyltransferase family. As to quaternary structure, homodimer.

It carries out the reaction D-glycero-beta-D-manno-heptose 7-phosphate + ATP = D-glycero-beta-D-manno-heptose 1,7-bisphosphate + ADP + H(+). It catalyses the reaction D-glycero-beta-D-manno-heptose 1-phosphate + ATP + H(+) = ADP-D-glycero-beta-D-manno-heptose + diphosphate. Its pathway is nucleotide-sugar biosynthesis; ADP-L-glycero-beta-D-manno-heptose biosynthesis; ADP-L-glycero-beta-D-manno-heptose from D-glycero-beta-D-manno-heptose 7-phosphate: step 1/4. It participates in nucleotide-sugar biosynthesis; ADP-L-glycero-beta-D-manno-heptose biosynthesis; ADP-L-glycero-beta-D-manno-heptose from D-glycero-beta-D-manno-heptose 7-phosphate: step 3/4. Catalyzes the phosphorylation of D-glycero-D-manno-heptose 7-phosphate at the C-1 position to selectively form D-glycero-beta-D-manno-heptose-1,7-bisphosphate. Functionally, catalyzes the ADP transfer from ATP to D-glycero-beta-D-manno-heptose 1-phosphate, yielding ADP-D-glycero-beta-D-manno-heptose. In Sodalis glossinidius (strain morsitans), this protein is Bifunctional protein HldE.